Here is an 859-residue protein sequence, read N- to C-terminus: DNA mismatch repair protein MutS (859 aa).

614 to 621 contributes to the ATP binding site; the sequence is GPNMGGKS.

Belongs to the DNA mismatch repair MutS family.

Functionally, this protein is involved in the repair of mismatches in DNA. It is possible that it carries out the mismatch recognition step. This protein has a weak ATPase activity. The chain is DNA mismatch repair protein MutS from Histophilus somni (strain 2336) (Haemophilus somnus).